We begin with the raw amino-acid sequence, 554 residues long: Polyamine aminopropyltransferase 2 (554 aa).

Residues 1 to 13 (MIEPHAPAPPGSP) are compositionally biased toward pro residues. The tract at residues 1 to 20 (MIEPHAPAPPGSPPSWGGPC) is disordered. A run of 6 helical transmembrane segments spans residues 37–57 (FLVLAGVFVCAACGLVYELEL), 69–89 (VTQASVVLSVMVFAMGLGSLA), 106–126 (AALALVGGSSAMLLYAVFAWT), 139–159 (ILLVAFSLAIGVLIGAEVPLL), 184–204 (VGALVGGLAFPFVLLPFLGQL), and 206–226 (GALLTGTVNAVVGAALVLGLF). The tract at residues 235–516 (RWLLLTANAV…RTAPAPRLDP (282 aa)) is spermidine synthase. A PABS domain is found at 247–492 (ALLATATVLA…SVPGPRRAAA (246 aa)). Gln281 contacts S-methyl-5'-thioadenosine. Spermidine-binding residues include His313 and Asp335. Residues Glu355 and 389–390 (DA) each bind S-methyl-5'-thioadenosine. The active-site Proton acceptor is the Asp408. Positions 476 to 495 (DTGPGPGSVPGPRRAAAGPP) are disordered. Residues 485-495 (PGPRRAAAGPP) show a composition bias toward low complexity.

Belongs to the spermidine/spermine synthase family. In terms of assembly, homodimer or homotetramer.

The protein resides in the cell membrane. It carries out the reaction S-adenosyl 3-(methylsulfanyl)propylamine + putrescine = S-methyl-5'-thioadenosine + spermidine + H(+). It functions in the pathway amine and polyamine biosynthesis; spermidine biosynthesis; spermidine from putrescine: step 1/1. In terms of biological role, catalyzes the irreversible transfer of a propylamine group from the amino donor S-adenosylmethioninamine (decarboxy-AdoMet) to putrescine (1,4-diaminobutane) to yield spermidine. This Streptomyces coelicolor (strain ATCC BAA-471 / A3(2) / M145) protein is Polyamine aminopropyltransferase 2.